Consider the following 212-residue polypeptide: Thymidylate kinase (212 aa).

11–18 (GPEGAGKT) contributes to the ATP binding site.

The protein belongs to the thymidylate kinase family.

The enzyme catalyses dTMP + ATP = dTDP + ADP. In terms of biological role, phosphorylation of dTMP to form dTDP in both de novo and salvage pathways of dTTP synthesis. This is Thymidylate kinase from Streptococcus pneumoniae (strain P1031).